A 235-amino-acid chain; its full sequence is Acyl-protein thioesterase 1 (235 aa).

Active-site charge relay system residues include Ser125, Asp181, and His213.

Belongs to the AB hydrolase superfamily. AB hydrolase 2 family.

It is found in the cytoplasm. Its subcellular location is the nucleus. It carries out the reaction S-hexadecanoyl-L-cysteinyl-[protein] + H2O = L-cysteinyl-[protein] + hexadecanoate + H(+). In terms of biological role, hydrolyzes fatty acids from S-acylated cysteine residues in proteins with a strong preference for palmitoylated G-alpha proteins over other acyl substrates. Mediates the deacylation of G-alpha proteins such as GPA1 in vivo, but has weak or no activity toward palmitoylated Ras proteins. Has weak lysophospholipase activity in vitro; however such activity may not exist in vivo. The protein is Acyl-protein thioesterase 1 of Gibberella zeae (strain ATCC MYA-4620 / CBS 123657 / FGSC 9075 / NRRL 31084 / PH-1) (Wheat head blight fungus).